Here is a 212-residue protein sequence, read N- to C-terminus: MIIAIDGPAASGKGTLAKRLAAHYGFRHLDTGVIYRAVAKAMLDAGADLTDEARAAEVARTLDPSRFDDPALKSHAVGEAASVVSAHPQVRAALVEFQKTFAAAPPGAVLDGRDIGTVICPDAEVKIFVVASPEVRAHRRFLEAQSRGEPADEAVILSDIVKRDERDKNRSAAPLKQAPDAVLLDNSYLDIEGGVRAAIDIVEAVRAGRRRV.

7 to 15 (GPAASGKGT) is an ATP binding site.

This sequence belongs to the cytidylate kinase family. Type 1 subfamily.

The protein resides in the cytoplasm. It catalyses the reaction CMP + ATP = CDP + ADP. The enzyme catalyses dCMP + ATP = dCDP + ADP. The polypeptide is Cytidylate kinase (Rhodopseudomonas palustris (strain TIE-1)).